The sequence spans 336 residues: tRNA(Ile)-lysidine synthase (336 aa).

40-45 (SGGQDS) contributes to the ATP binding site.

It belongs to the tRNA(Ile)-lysidine synthase family.

The protein localises to the cytoplasm. It catalyses the reaction cytidine(34) in tRNA(Ile2) + L-lysine + ATP = lysidine(34) in tRNA(Ile2) + AMP + diphosphate + H(+). Its function is as follows. Ligates lysine onto the cytidine present at position 34 of the AUA codon-specific tRNA(Ile) that contains the anticodon CAU, in an ATP-dependent manner. Cytidine is converted to lysidine, thus changing the amino acid specificity of the tRNA from methionine to isoleucine. This is tRNA(Ile)-lysidine synthase from Prochlorococcus marinus (strain SARG / CCMP1375 / SS120).